We begin with the raw amino-acid sequence, 157 residues long: 17.6 kDa class I heat shock protein 3 (157 aa).

The sHSP domain maps to 43-157 (DVAAFTNAKV…PEVKSIDISG (115 aa)).

Belongs to the small heat shock protein (HSP20) family. As to quaternary structure, may form oligomeric structures.

It is found in the cytoplasm. This is 17.6 kDa class I heat shock protein 3 (HSP17.6C) from Arabidopsis thaliana (Mouse-ear cress).